Here is a 141-residue protein sequence, read N- to C-terminus: ER membrane protein complex subunit 5 (141 aa).

Topologically, residues 1–6 are cytoplasmic; the sequence is MSFVSK. The helical transmembrane segment at 7-27 threads the bilayer; the sequence is LLYTVSALVLFHSGFSSYEFH. Topologically, residues 28–48 are lumenal; it reads HLLKLNSLNNAQGAISKLPKD. The helical transmembrane segment at 49-69 threads the bilayer; that stretch reads IMYETYAGLILFVLAVFTSFE. Residues 70–141 are Cytoplasmic-facing; the sequence is KLQYLPIESN…WASNTVKKEK (72 aa).

The protein belongs to the membrane magnesium transporter (TC 1.A.67) family. Component of the ER membrane protein complex (EMC), which is composed of EMC1, EMC2, EMC3, EMC4, EMC5 and EMC6.

The protein localises to the endoplasmic reticulum membrane. Its function is as follows. Part of the endoplasmic reticulum membrane protein complex (EMC) that enables the energy-independent insertion into endoplasmic reticulum membranes of newly synthesized membrane proteins. Preferentially accommodates proteins with transmembrane domains that are weakly hydrophobic or contain destabilizing features such as charged and aromatic residues. Involved in the cotranslational insertion of multi-pass membrane proteins in which stop-transfer membrane-anchor sequences become ER membrane spanning helices. It is also required for the post-translational insertion of tail-anchored/TA proteins in endoplasmic reticulum membranes. By mediating the proper cotranslational insertion of N-terminal transmembrane domains in an N-exo topology, with translocated N-terminus in the lumen of the ER, controls the topology of multi-pass membrane proteins. In Saccharomyces cerevisiae (strain ATCC 204508 / S288c) (Baker's yeast), this protein is ER membrane protein complex subunit 5 (EMC5).